The chain runs to 77 residues: Acyl carrier protein (77 aa).

The Carrier domain occupies 2–77; that stretch reads ADALERVTKI…DAVNYINSKQ (76 aa). At Ser37 the chain carries O-(pantetheine 4'-phosphoryl)serine.

This sequence belongs to the acyl carrier protein (ACP) family. In terms of processing, 4'-phosphopantetheine is transferred from CoA to a specific serine of apo-ACP by AcpS. This modification is essential for activity because fatty acids are bound in thioester linkage to the sulfhydryl of the prosthetic group.

It localises to the cytoplasm. It functions in the pathway lipid metabolism; fatty acid biosynthesis. Its function is as follows. Carrier of the growing fatty acid chain in fatty acid biosynthesis. In Bacillus licheniformis (strain ATCC 14580 / DSM 13 / JCM 2505 / CCUG 7422 / NBRC 12200 / NCIMB 9375 / NCTC 10341 / NRRL NRS-1264 / Gibson 46), this protein is Acyl carrier protein.